The chain runs to 614 residues: Putative ankyrin repeat protein RBE_0997 (614 aa).

ANK repeat units follow at residues 3–32, 36–65, 69–98, 102–131, 135–164, 168–197, 201–231, 239–268, and 272–301; these read KDEE…DPNI, DDKP…NPNA, DGEP…DPNL, RKNT…NLNA, SGYP…NPNL, DGSP…NVEA, DGNT…DKEK, NGET…TVNI, and AGYT…ELKE. The region spanning 348 to 580 is the Glutamine amidotransferase type-1 domain; that stretch reads NVEDIDYRKI…VQSAETFMNK (233 aa). Residue Cys444 is the Nucleophile of the active site. Residues His547 and Glu549 contribute to the active site.

In Rickettsia bellii (strain RML369-C), this protein is Putative ankyrin repeat protein RBE_0997.